A 277-amino-acid chain; its full sequence is Digeranylgeranylglyceryl phosphate synthase (277 aa).

7 helical membrane passes run 16–36 (ILAG…IPDI), 84–104 (ALYY…FLNI), 107–127 (FVFA…LKPL), 146–166 (GAIG…AFLV), 200–220 (AIIA…PVKV), 221–241 (GIGL…KASI), and 257–277 (LKIA…TKGV).

It belongs to the UbiA prenyltransferase family. DGGGP synthase subfamily. The cofactor is Mg(2+).

The protein resides in the cell membrane. It catalyses the reaction sn-3-O-(geranylgeranyl)glycerol 1-phosphate + (2E,6E,10E)-geranylgeranyl diphosphate = 2,3-bis-O-(geranylgeranyl)-sn-glycerol 1-phosphate + diphosphate. Its pathway is membrane lipid metabolism; glycerophospholipid metabolism. Its function is as follows. Prenyltransferase that catalyzes the transfer of the geranylgeranyl moiety of geranylgeranyl diphosphate (GGPP) to the C2 hydroxyl of (S)-3-O-geranylgeranylglyceryl phosphate (GGGP). This reaction is the second ether-bond-formation step in the biosynthesis of archaeal membrane lipids. This Pyrococcus furiosus (strain ATCC 43587 / DSM 3638 / JCM 8422 / Vc1) protein is Digeranylgeranylglyceryl phosphate synthase.